A 553-amino-acid chain; its full sequence is Methyl-coenzyme M reductase II subunit alpha (553 aa).

Residue glutamine 150 coordinates coenzyme F430. Coenzyme B contacts are provided by residues arginine 228, lysine 259 to histidine 260, and arginine 273. Histidine 260 is subject to Pros-methylhistidine. 5-methylarginine is present on arginine 274. A coenzyme M-binding site is contributed by tyrosine 335. A 2-methylglutamine modification is found at glutamine 402. A coenzyme M-binding site is contributed by tyrosine 446. At glycine 447 the chain carries 1-thioglycine. The residue at position 452 (aspartate 452) is a (Z)-2,3-didehydroaspartate. At cysteine 454 the chain carries S-methylcysteine.

It belongs to the methyl-coenzyme M reductase alpha subunit family. In terms of assembly, MCR is a hexamer of two alpha, two beta, and two gamma chains, forming a dimer of heterotrimers. Requires coenzyme F430 as cofactor. In terms of processing, the alpha subunit contains six modified amino acids near the active site region. Is methylated on His-260, Arg-274, Gln-402 and Cys-454, probably by the action of specific S-adenosylmethionine-dependent methyltransferases. Also contains a thioglycine at position 447, forming a thiopeptide bond. Contains a didehydroaspartate residue at position 452. The methylation on C5 of Arg-274 is a post-translational methylation not essential in vivo, but which plays a role for the stability and structural integrity of MCR.

The enzyme catalyses coenzyme B + methyl-coenzyme M = methane + coenzyme M-coenzyme B heterodisulfide. Its pathway is one-carbon metabolism; methyl-coenzyme M reduction; methane from methyl-coenzyme M: step 1/1. Functionally, component of the methyl-coenzyme M reductase (MCR) I that catalyzes the reductive cleavage of methyl-coenzyme M (CoM-S-CH3 or 2-(methylthio)ethanesulfonate) using coenzyme B (CoB or 7-mercaptoheptanoylthreonine phosphate) as reductant which results in the production of methane and the mixed heterodisulfide of CoB and CoM (CoM-S-S-CoB). This is the final step in methanogenesis. This Methanothermobacter marburgensis (strain ATCC BAA-927 / DSM 2133 / JCM 14651 / NBRC 100331 / OCM 82 / Marburg) (Methanobacterium thermoautotrophicum) protein is Methyl-coenzyme M reductase II subunit alpha (mrtA).